A 311-amino-acid chain; its full sequence is 4-hydroxy-tetrahydrodipicolinate synthase (311 aa).

Pyruvate is bound at residue T51. The Proton donor/acceptor role is filled by Y140. Catalysis depends on K168, which acts as the Schiff-base intermediate with substrate. I209 lines the pyruvate pocket.

This sequence belongs to the DapA family. As to quaternary structure, homotetramer; dimer of dimers.

The protein localises to the cytoplasm. It carries out the reaction L-aspartate 4-semialdehyde + pyruvate = (2S,4S)-4-hydroxy-2,3,4,5-tetrahydrodipicolinate + H2O + H(+). It participates in amino-acid biosynthesis; L-lysine biosynthesis via DAP pathway; (S)-tetrahydrodipicolinate from L-aspartate: step 3/4. Its function is as follows. Catalyzes the condensation of (S)-aspartate-beta-semialdehyde [(S)-ASA] and pyruvate to 4-hydroxy-tetrahydrodipicolinate (HTPA). This chain is 4-hydroxy-tetrahydrodipicolinate synthase, found in Streptococcus pneumoniae (strain Taiwan19F-14).